The chain runs to 150 residues: S-protein homolog 3 (150 aa).

An N-terminal signal peptide occupies residues 1–23 (MKNILKTQVHVVVIYLLIKIAFS). N-linked (GlcNAc...) asparagine glycans are attached at residues asparagine 32 and asparagine 70.

This sequence belongs to the plant self-incompatibility (S1) protein family.

It localises to the secreted. The polypeptide is S-protein homolog 3 (Arabidopsis thaliana (Mouse-ear cress)).